A 335-amino-acid chain; its full sequence is UPF0353 protein Mflv_3659 (335 aa).

Helical transmembrane passes span 18–38 (WFFL…VVQL) and 67–87 (LPAV…AGPT). Positions 98–294 (VVMLVIDVSQ…EQLKQVFTNL (197 aa)) constitute a VWFA domain. A helical membrane pass occupies residues 309–329 (VGWLRLGAGVLALAALGALLI).

It belongs to the UPF0353 family.

The protein resides in the cell membrane. This is UPF0353 protein Mflv_3659 from Mycolicibacterium gilvum (strain PYR-GCK) (Mycobacterium gilvum (strain PYR-GCK)).